The sequence spans 398 residues: Signal-regulatory protein beta-1 isoform 3 (398 aa).

Residues 1-29 (MPVPASWPHLPSPFLLMTLLLGRLTGVAG) form the signal peptide. Topologically, residues 30 to 371 (EEELQVIQPD…GPALASAAPL (342 aa)) are extracellular. In terms of domain architecture, Ig-like V-type spans 31-136 (EELQVIQPDK…SPDHVEFKSG (106 aa)). Cystine bridges form between Cys54–Cys120 and Cys169–Cys227. Ig-like C1-type domains follow at residues 147 to 246 (PSAP…ANLS) and 253 to 347 (PTLE…HDLK). Asn244, Asn291, and Asn318 each carry an N-linked (GlcNAc...) asparagine glycan. A disulfide bond links Cys272 and Cys330. Over residues 337–354 (QPAVSKSHDLKVSAHPKE) the composition is skewed to basic and acidic residues. Residues 337-361 (QPAVSKSHDLKVSAHPKEQGSNTAP) form a disordered region. Residues 372 to 392 (LIAFLLGPKVLLVVGVSVIYV) form a helical membrane-spanning segment. Residues 393–398 (YWKQKA) lie on the Cytoplasmic side of the membrane.

The protein localises to the membrane. Functionally, immunoglobulin-like cell surface receptor involved in the negative regulation of receptor tyrosine kinase-coupled signaling processes. This is Signal-regulatory protein beta-1 isoform 3 (SIRPB1) from Homo sapiens (Human).